The chain runs to 258 residues: MQTYLTLLETLLTTGVDKSDRTGVGTRSLFGYQMRFDLAAGFPLLTTKKMHFKSIVYELLWFLSGNTNIAYLNQNGVSIWDEWADKNGDLGPIYGKQWRNWAGRDQIHQVLTSLKTNPDSRRMLVSSWNVAQLEEMALPPCHVLFQFYVANGRLSCQLYQRSADVFLGVPFNIASYALLTMMMAQQADLELGDFVWTGGDVHLYRNHFAQAQEQLKRQPYPLPKMHIKRAKSIDDYVFEDFLLVDYRCHAAIKAPVAV.

Arg-21 serves as a coordination point for dUMP. His-51 lines the (6R)-5,10-methylene-5,6,7,8-tetrahydrofolate pocket. 121 to 122 lines the dUMP pocket; the sequence is RR. Residue Cys-141 is the Nucleophile of the active site. Residues 161–164, Asn-172, and 202–204 contribute to the dUMP site; these read RSAD and HLY. Asp-164 lines the (6R)-5,10-methylene-5,6,7,8-tetrahydrofolate pocket. Residue Ala-257 participates in (6R)-5,10-methylene-5,6,7,8-tetrahydrofolate binding.

The protein belongs to the thymidylate synthase family. Bacterial-type ThyA subfamily. As to quaternary structure, homodimer.

The protein resides in the cytoplasm. The catalysed reaction is dUMP + (6R)-5,10-methylene-5,6,7,8-tetrahydrofolate = 7,8-dihydrofolate + dTMP. Its pathway is pyrimidine metabolism; dTTP biosynthesis. Catalyzes the reductive methylation of 2'-deoxyuridine-5'-monophosphate (dUMP) to 2'-deoxythymidine-5'-monophosphate (dTMP) while utilizing 5,10-methylenetetrahydrofolate (mTHF) as the methyl donor and reductant in the reaction, yielding dihydrofolate (DHF) as a by-product. This enzymatic reaction provides an intracellular de novo source of dTMP, an essential precursor for DNA biosynthesis. The chain is Thymidylate synthase from Dichelobacter nodosus (strain VCS1703A).